A 582-amino-acid polypeptide reads, in one-letter code: Membrane protein insertase YidC (582 aa).

4 consecutive transmembrane segments (helical) span residues N4–Q24, I376–F396, A446–F466, and F542–W562.

The protein belongs to the OXA1/ALB3/YidC family. Type 1 subfamily. As to quaternary structure, interacts with the Sec translocase complex via SecD. Specifically interacts with transmembrane segments of nascent integral membrane proteins during membrane integration.

The protein localises to the cell inner membrane. Required for the insertion and/or proper folding and/or complex formation of integral membrane proteins into the membrane. Involved in integration of membrane proteins that insert both dependently and independently of the Sec translocase complex, as well as at least some lipoproteins. Aids folding of multispanning membrane proteins. In Treponema denticola (strain ATCC 35405 / DSM 14222 / CIP 103919 / JCM 8153 / KCTC 15104), this protein is Membrane protein insertase YidC.